Reading from the N-terminus, the 335-residue chain is Biotin synthase (335 aa).

The Radical SAM core domain occupies 47–276 (FYGKKVKLNM…SKEIRISGGR (230 aa)). [4Fe-4S] cluster-binding residues include Cys-65, Cys-69, and Cys-72. Positions 109, 141, 201, and 271 each coordinate [2Fe-2S] cluster.

This sequence belongs to the radical SAM superfamily. Biotin synthase family. Homodimer. It depends on [4Fe-4S] cluster as a cofactor. [2Fe-2S] cluster is required as a cofactor.

It carries out the reaction (4R,5S)-dethiobiotin + (sulfur carrier)-SH + 2 reduced [2Fe-2S]-[ferredoxin] + 2 S-adenosyl-L-methionine = (sulfur carrier)-H + biotin + 2 5'-deoxyadenosine + 2 L-methionine + 2 oxidized [2Fe-2S]-[ferredoxin]. The protein operates within cofactor biosynthesis; biotin biosynthesis; biotin from 7,8-diaminononanoate: step 2/2. Its function is as follows. Catalyzes the conversion of dethiobiotin (DTB) to biotin by the insertion of a sulfur atom into dethiobiotin via a radical-based mechanism. The protein is Biotin synthase of Bacillus subtilis subsp. natto.